Here is a 1521-residue protein sequence, read N- to C-terminus: MENNNGNSVINKSNDKNSNNPNYMLLDRIFRLQKHNLSILLSNNNNNNNNNNNNNSNITIQSATNYLNELLNCLNELLTKFQSKTFQSPPQPINTSSTQTNYNNQNNPNPNPNPSPNPNSNNNNNNNTHITIILSTEIIIKILVKFCSVLPMDINYHKISVYGSPINLSLIQLPLKLAQLIVLISRYQNSITFNDHPNELEQLVNYFLYIIKPEKQIASSPSTPSTPSSSSRSQQQQQQQQQQSSSSSLSSSSSFHNVNTNLRIESLKALSSLLHNNGPNITSKLQQPLIECLIELSNYSDQSIDQETKRIAIVSLGNLCMQCGTKLSKYYIQIYDRLSLNLERVTSHINSDKYLIKFTSSILRSMQLLITQAKGILDQKSKSLYNILKTLMFYGVNISSSMSSVLTYQYQFEYSSRKKKQLQQQLANNNVLNSNSNSSSGGASSSSGGSNNTSPAIVTSASIHNSNGNSNENEIEKSTGITSSDSDIDERYNLSKLRFLTITLLNTMAKHSPKVFFGYWTLFLPSTPFPLTPTVFTSMTNDPDIKIKIVAANFLQTIIDGSKDYLVAINTSNHHNHHHSHSKSITTASPIMSRLNLNDNNNNNINNLNSNSFTTFSQNLTSILKEIHNGLIMILVQDPNYILPAFHQQILRCVSTLIINCPYEKLNMPSLLTSLLSAISPYIQNRDHSIQLTSLICIKQLFDITPLSPKELTPVLNNNNFIKIILNFLNNNNNNNNNNNNNNNNNNNNNNNNNNNNNNNILSNTLTSSLINEPNQQHQHQQHQQQNQQHHHQHQQQSLHFNQIEYVKIECLQIIGALTKHNFTILLEYIDLVYNILISILKKEISIHNSSGIVNSQQQQQQQQQQQQQQQQQQQQQQQQQQQQQQQQQQQQQQHNNTQNINNISGLNESSIGNYCLKTFEEITKAIQDSHKNNNTDIDYKICEKEFWNLFFLILPSLTVDPYPQIRASICNIFSNIGSKQFESMTKNLQMHLVSVVLGLIFDEQHIVRASACRSVGILIKIDSLHDDANFLSNSASCLTKSMGDVNINVRIKACWSLANLCDHLVSLKSKQELLFNDIPRQILSKVLESLLNSSFDNPKIRSNVVRALGNFARFADKKVLYNLNETSTFCKINENNNQNYNNQNISDYFHSIGGFNNLMNGVGGGGGSSSSGGGNGSGTIIPTTEEEEEKEEINIENKQKQSLPPQFSNSITLKKDSIILDRIVDSLLKNAQEPSSSFNFVKVKWNACYALGNIFYNQDIEFPNDDNNNNNNNNNKWLPQVYSTLITLMKSCKNFKTRINATSSLATPTHSRRKYGPFYKDVFEAVLESLSNINTVSDTSEFQYRDNLEKQLEIALIHLISEMKSNEIKSFDNCFFQYTDIIVNSFQKHQIILPIPQQPLPTSKTSSSSSSTSSEATPYLSSSVPPSIVTSTPSTTPMISSSNPNTSSLPTSERPTIKEYQKALEIIKEFCQNHNNIDTMDDTQKLHLSQLCLLFDFSESNYQDMYSKLQEVHSTGKSSH.

5 disordered regions span residues methionine 1–asparagine 20, threonine 85–asparagine 124, alanine 218–serine 254, valine 431–threonine 482, and asparagine 735–glutamine 797. 3 stretches are compositionally biased toward low complexity: residues asparagine 94–proline 108, serine 219–serine 254, and valine 431–serine 454. Residues proline 455–histidine 464 are compositionally biased toward polar residues. Low complexity-rich tracts occupy residues asparagine 465–threonine 482 and asparagine 735–leucine 762. A compositionally biased stretch (polar residues) spans serine 763–proline 774. Low complexity predominate over residues asparagine 775–glutamine 788. A coiled-coil region spans residues isoleucine 853–asparagine 903. The segment covering glutamine 1398–serine 1453 has biased composition (low complexity). The interval glutamine 1398 to arginine 1455 is disordered.

This is an uncharacterized protein from Dictyostelium discoideum (Social amoeba).